The following is a 286-amino-acid chain: Acyl-CoA-binding domain-containing protein 6 (286 aa).

Residues 32-117 (LQCQFEQAAK…VKKLDPDWSP (86 aa)) enclose the ACB domain. Residues 59 to 63 (YARYK), Lys-85, and Tyr-104 contribute to the an acyl-CoA site. 2 ANK repeats span residues 182 to 211 (EGRSLLHWACDRGHTQLVSVILFHNAHINM) and 215 to 244 (EGQTPLHYASACEFPDIVDLLLDHGADPSL).

It is found in the cytoplasm. The protein resides in the nucleus. Binds long-chain acyl-coenzyme A molecules with a strong preference for unsaturated C18:1-CoA. Does not bind fatty acids. Plays a role in protein N-myristoylation. In Xenopus laevis (African clawed frog), this protein is Acyl-CoA-binding domain-containing protein 6 (acbd6).